Here is a 101-residue protein sequence, read N- to C-terminus: Putative defensin-like protein 253 (101 aa).

Positions 1-23 are cleaved as a signal peptide; sequence MRFASLFVVYCTFMFLDISHVKC. Intrachain disulfides connect cysteine 31/cysteine 84, cysteine 41/cysteine 66, cysteine 49/cysteine 76, and cysteine 64/cysteine 78.

This sequence belongs to the DEFL family.

It is found in the secreted. This Arabidopsis thaliana (Mouse-ear cress) protein is Putative defensin-like protein 253 (SCRL15).